Reading from the N-terminus, the 471-residue chain is Mitochondrial distribution and morphology protein 10 (471 aa).

Disordered stretches follow at residues 272–291, 374–394, and 436–455; these read TEMP…SNHG, ADTP…DEEN, and SWAA…GGVS. Residues 276 to 288 show a composition bias toward low complexity; sequence SSSSSTSSTTTTS. The span at 444 to 455 shows a compositional bias: gly residues; that stretch reads AGGGQSVGGGVS.

It belongs to the MDM10 family. As to quaternary structure, component of the ER-mitochondria encounter structure (ERMES) or MDM complex, composed of mmm1, mdm10, mdm12 and mdm34. Associates with the mitochondrial outer membrane sorting assembly machinery SAM(core) complex.

It localises to the mitochondrion outer membrane. In terms of biological role, component of the ERMES/MDM complex, which serves as a molecular tether to connect the endoplasmic reticulum and mitochondria. Components of this complex are involved in the control of mitochondrial shape and protein biogenesis and may function in phospholipid exchange. mdm10 is involved in the late assembly steps of the general translocase of the mitochondrial outer membrane (TOM complex). Functions in the tom40-specific route of the assembly of outer membrane beta-barrel proteins, including the association of tom40 with the receptor tom22 and small TOM proteins. Can associate with the SAM(core) complex as well as the mdm12-mmm1 complex, both involved in late steps of the major beta-barrel assembly pathway, that is responsible for biogenesis of all outer membrane beta-barrel proteins. May act as a switch that shuttles between both complexes and channels precursor proteins into the tom40-specific pathway. Plays a role in mitochondrial morphology and in the inheritance of mitochondria. The protein is Mitochondrial distribution and morphology protein 10 (mdmB) of Neosartorya fischeri (strain ATCC 1020 / DSM 3700 / CBS 544.65 / FGSC A1164 / JCM 1740 / NRRL 181 / WB 181) (Aspergillus fischerianus).